The primary structure comprises 562 residues: Formate--tetrahydrofolate ligase (562 aa).

T71–S78 serves as a coordination point for ATP.

It belongs to the formate--tetrahydrofolate ligase family.

The catalysed reaction is (6S)-5,6,7,8-tetrahydrofolate + formate + ATP = (6R)-10-formyltetrahydrofolate + ADP + phosphate. It functions in the pathway one-carbon metabolism; tetrahydrofolate interconversion. The polypeptide is Formate--tetrahydrofolate ligase (Bacillus cereus (strain G9842)).